A 172-amino-acid polypeptide reads, in one-letter code: uncharacterized protein (172 aa).

4 consecutive transmembrane segments (helical) span residues 1-21 (MLFI…SLSI), 41-61 (NSTL…IEAN), 72-92 (QIGL…IYEL), and 136-156 (FCQA…ILAV).

The protein resides in the cell membrane. This is an uncharacterized protein from Haemophilus influenzae (strain ATCC 51907 / DSM 11121 / KW20 / Rd).